Consider the following 491-residue polypeptide: MMVRIFDTTLRDGEQTPGVSLTPNDKLEIAKKLDELGVDVIEAGSAITSKGEREGIKLITKEGLNAEICSFVRALPVDIDAALECDVDSVHLVVPTSPIHMKYKLRKTEDEVLETALKAVEYAKEHGLIVELSAEDATRSDVNFLIKLFNEGEKVGADRVCVCDTVGVLTPQKSQELFKKITENVNLPVSVHCHNDFGMATANTCSAVLGGAVQCHVTVNGIGERAGNASLEEVVAALKILYGYDTKIKMEKLYEVSRIVSRLMKLPVPPNKAIVGDNAFAHEAGIHVDGLIKNTETYEPIKPEMVGNRRRIILGKHSGRKALKYKLDLMGINVSDEQLNKIYERVKEFGDLGKYISDADLLAIVREVTGKLVEEKIKLDELTVVSGNKITPIASVKLHYKGEDITLIETAYGVGPVDAAINAVRKAISGVADIKLVEYRVEAIGGGTDALIEVVVKLRKGTEIVEVRKSDADIIRASVDAVMEGINMLLN.

The 252-residue stretch at 3-254 (VRIFDTTLRD…DTKIKMEKLY (252 aa)) folds into the Pyruvate carboxyltransferase domain.

The protein belongs to the alpha-IPM synthase/homocitrate synthase family. As to quaternary structure, homodimer.

The catalysed reaction is pyruvate + acetyl-CoA + H2O = (3R)-citramalate + CoA + H(+). Its pathway is amino-acid biosynthesis; L-isoleucine biosynthesis; 2-oxobutanoate from pyruvate: step 1/3. Functionally, catalyzes the condensation of pyruvate and acetyl-coenzyme A to form (R)-citramalate. In Methanocaldococcus jannaschii (strain ATCC 43067 / DSM 2661 / JAL-1 / JCM 10045 / NBRC 100440) (Methanococcus jannaschii), this protein is (R)-citramalate synthase CimA (cimA).